We begin with the raw amino-acid sequence, 411 residues long: Basic leucine zipper 10 (411 aa).

Disordered stretches follow at residues 1-36, 76-99, 140-251, and 362-411; these read MNSI…DEVS, SLPS…DSGN, SVKP…NDLK, and NNFA…KCVD. Residues 24-36 show a composition bias toward polar residues; the sequence is PDSSKPVTADEVS. Basic and acidic residues predominate over residues 89–98; it reads DSRFRDRDSG. Composition is skewed to polar residues over residues 146 to 173 and 183 to 193; these read STSS…TSSL and SMKQVTSGSSR. Phosphoserine is present on Ser196. A compositionally biased stretch (acidic residues) spans 196–206; it reads SDDEDLDEENE. Residues 215 to 278 enclose the bZIP domain; it reads DVKKSRRMLS…DEAAVGNRIL (64 aa). A basic motif region spans residues 217 to 236; it reads KKSRRMLSNRESARRSRRRK. Positions 219 to 226 match the Nuclear localization signal motif; sequence SRRMLSNR. The interval 243–257 is leucine-zipper; that stretch reads LETQVNDLKGEHSSL. Residues 368–390 show a composition bias toward polar residues; sequence PSQTSSPLQRIRNGQNHHVTPSA.

The protein belongs to the bZIP family. As to quaternary structure, forms a heterodimer with BZIP1, BZIP2, BZIP9, BZIP11, BZIP44, BZIP53 and BZIP63. Interacts with ABI3 and forms a complex made of ABI3, BZIP53 and BZIP10. Binding with LSD1 leads to cytoplasmic retention. Expressed in roots, shoots, stems, young leaves, trichomes, hydathodes, siliques, seeds, and flowers, mostly in vascular tissues.

It localises to the nucleus. The protein resides in the cytoplasm. Functionally, transcription factor that binds to the C-box-like motif (5'-TGCTGACGTCA-3') and G-box-like motif (5'-CCACGTGGCC-3'), ABRE elements, of gene promoters. Binds to the 5'-ACGT-3' motif of seed storage protein (SSP) encoding gene promoters (e.g. At2S and CRU3) and promotes their expression in seeds when in complex with ABI3 and BZIP53. Involved in the defense responses to the biotrophic pathogen Hyaloperonospora parasitica and oxidative stress responses; mediates positively cell death. Promotes BZIP53-mediated response to hypoosmolarity stress that leads to POX1/PRODH1 accumulation. This chain is Basic leucine zipper 10 (BZIP10), found in Arabidopsis thaliana (Mouse-ear cress).